Here is a 354-residue protein sequence, read N- to C-terminus: DNA polymerase IV (354 aa).

The region spanning Ile-6–Gly-187 is the UmuC domain. Mg(2+)-binding residues include Asp-10 and Asp-105. Glu-106 is a catalytic residue.

Belongs to the DNA polymerase type-Y family. Monomer. Mg(2+) is required as a cofactor.

Its subcellular location is the cytoplasm. It carries out the reaction DNA(n) + a 2'-deoxyribonucleoside 5'-triphosphate = DNA(n+1) + diphosphate. Its function is as follows. Poorly processive, error-prone DNA polymerase involved in untargeted mutagenesis. Copies undamaged DNA at stalled replication forks, which arise in vivo from mismatched or misaligned primer ends. These misaligned primers can be extended by PolIV. Exhibits no 3'-5' exonuclease (proofreading) activity. May be involved in translesional synthesis, in conjunction with the beta clamp from PolIII. The polypeptide is DNA polymerase IV (Pseudomonas putida (strain ATCC 700007 / DSM 6899 / JCM 31910 / BCRC 17059 / LMG 24140 / F1)).